The chain runs to 954 residues: Valine--tRNA ligase (954 aa).

The 'HIGH' region motif lies at 48–58; it reads PNVTGSLHMGH. The 'KMSKS' region signature appears at 560 to 564; sequence KMSKS. An ATP-binding site is contributed by lysine 563. The stretch at 883–954 forms a coiled coil; sequence AGFINKEAEL…QTQYQAIENL (72 aa).

Belongs to the class-I aminoacyl-tRNA synthetase family. ValS type 1 subfamily. As to quaternary structure, monomer.

The protein localises to the cytoplasm. The enzyme catalyses tRNA(Val) + L-valine + ATP = L-valyl-tRNA(Val) + AMP + diphosphate. In terms of biological role, catalyzes the attachment of valine to tRNA(Val). As ValRS can inadvertently accommodate and process structurally similar amino acids such as threonine, to avoid such errors, it has a 'posttransfer' editing activity that hydrolyzes mischarged Thr-tRNA(Val) in a tRNA-dependent manner. The polypeptide is Valine--tRNA ligase (Actinobacillus pleuropneumoniae serotype 3 (strain JL03)).